The chain runs to 146 residues: Actin-depolymerizing factor 6 (146 aa).

S13 bears the Phosphoserine mark. Residues 14–146 (GMGVADESKT…DLEVLRERAN (133 aa)) enclose the ADF-H domain.

The protein belongs to the actin-binding proteins ADF family. Post-translationally, phosphorylated. As to expression, expressed in vascular tissues of all organs.

Its subcellular location is the cytoplasm. The protein resides in the cytoskeleton. Functionally, actin-depolymerizing protein. Severs actin filaments (F-actin) and binds to actin monomers. This chain is Actin-depolymerizing factor 6 (ADF6), found in Arabidopsis thaliana (Mouse-ear cress).